A 140-amino-acid polypeptide reads, in one-letter code: Putative nickel-responsive regulator (140 aa).

Positions 81, 92, 94, and 100 each coordinate Ni(2+).

It belongs to the transcriptional regulatory CopG/NikR family. It depends on Ni(2+) as a cofactor.

Its function is as follows. Transcriptional regulator. The polypeptide is Putative nickel-responsive regulator (Methanothrix thermoacetophila (strain DSM 6194 / JCM 14653 / NBRC 101360 / PT) (Methanosaeta thermophila)).